The chain runs to 136 residues: Large ribosomal subunit protein uL16c (136 aa).

Belongs to the universal ribosomal protein uL16 family. In terms of assembly, part of the 50S ribosomal subunit.

The protein localises to the plastid. Its subcellular location is the chloroplast. The chain is Large ribosomal subunit protein uL16c from Zea mays (Maize).